The primary structure comprises 274 residues: Large ribosomal subunit protein uL2c (274 aa).

Disordered regions lie at residues 1 to 22 and 225 to 274; these read MAIH…DNQV and PVDH…RRSK.

It belongs to the universal ribosomal protein uL2 family. In terms of assembly, part of the 50S ribosomal subunit.

Its subcellular location is the plastid. The protein localises to the chloroplast. This Silene latifolia (White campion) protein is Large ribosomal subunit protein uL2c (rpl2).